The sequence spans 458 residues: MKRSLLIGVAAFALLAGTAGLAGTAGAADLKFKPGEDSRFNWASLEEFKKGHDLKGQTLTIFGPWRGEDEALFKSVYAYFVEATGVELKYSSSENYEQQIVIDTQAGSPPDVAILPQPGLIADLAAKGLLTPLGDETKQWLLDNYAAGQSWVDLSTYNGKDGTSALYAFPYKIDVKSLVWYVPENFEDAGYEVPKTMEELKALTEKIAEDGEKPWCIGLGSGGATGWPATDWVEDLMLRTQPAETYDKWVKNEIPFTDAAVTGALEEFGWFARNDAFVDGGAAAVASTDFRDSPKGLFSSPPKCYLHHQASFIPSFFPEGKVVGEDADFFYMPPYESKKELGNPVLGAGTLAMITKDTPAARAFIEFLKTPIAHEVWMAQTSFLTPYKSVNVDVYGNPPLKKQGEILLNATTFRFDGSDLMPGKIGAGAFWTGMVDFVGGKSSADVAAGVQKAWDSIK.

An N-terminal signal peptide occupies residues 1 to 27 (MKRSLLIGVAAFALLAGTAGLAGTAGA).

This sequence belongs to the bacterial solute-binding protein 1 family.

It localises to the periplasm. In terms of biological role, part of the binding-protein-dependent transport system for alpha-glucosides such as sucrose, maltose and trehalose. The chain is Alpha-glucosides-binding periplasmic protein AglE (aglE) from Rhizobium meliloti (strain 1021) (Ensifer meliloti).